The following is a 495-amino-acid chain: Adenosylhomocysteinase (495 aa).

Substrate contacts are provided by threonine 71, aspartate 156, and glutamate 218. NAD(+) is bound at residue 219–221 (TTT). Substrate-binding residues include lysine 248 and aspartate 252. NAD(+)-binding positions include asparagine 253, 282–287 (GYGDVG), glutamate 305, asparagine 340, 361–363 (IGH), and asparagine 409.

Belongs to the adenosylhomocysteinase family. The cofactor is NAD(+).

It is found in the cytoplasm. The catalysed reaction is S-adenosyl-L-homocysteine + H2O = L-homocysteine + adenosine. It participates in amino-acid biosynthesis; L-homocysteine biosynthesis; L-homocysteine from S-adenosyl-L-homocysteine: step 1/1. Functionally, may play a key role in the regulation of the intracellular concentration of adenosylhomocysteine. This is Adenosylhomocysteinase from Mycobacterium bovis (strain ATCC BAA-935 / AF2122/97).